Reading from the N-terminus, the 264-residue chain is Ribosome-recycling factor, mitochondrial (264 aa).

The protein belongs to the RRF family.

The protein resides in the mitochondrion. Necessary for protein synthesis in mitochondria. Functions as a ribosome recycling factor in mitochondria. In Yarrowia lipolytica (strain CLIB 122 / E 150) (Yeast), this protein is Ribosome-recycling factor, mitochondrial (RRF1).